A 248-amino-acid polypeptide reads, in one-letter code: Cytochrome c oxidase subunit 2 (248 aa).

Residues 1–39 (MMKELLMNNMLNDVPTPWAMYFQDSATPNMEGIMELHNN) lie on the Mitochondrial intermembrane side of the membrane. Residues 40–56 (VVFYLIIMLCFVTYMLY) form a helical membrane-spanning segment. At 57–87 (NISTVYNKSAVAYKYMNHGQFIEMVWTTFPA) the chain is on the mitochondrial matrix side. Residues 88-104 (VMLLIMAFPSFMLLYIC) traverse the membrane as a helical segment. Over 105–248 (DEVMAPAMTI…ADFLTWIDEQ (144 aa)) the chain is Mitochondrial intermembrane. His-183, Cys-218, Glu-220, Cys-222, His-226, and Met-229 together coordinate Cu cation. Glu-220 contributes to the Mg(2+) binding site.

It belongs to the cytochrome c oxidase subunit 2 family. In terms of assembly, component of the cytochrome c oxidase (complex IV, CIV), a multisubunit enzyme composed of a catalytic core of 3 subunits and several supernumerary subunits. The complex exists as a monomer or a dimer and forms supercomplexes (SCs) in the inner mitochondrial membrane with ubiquinol-cytochrome c oxidoreductase (cytochrome b-c1 complex, complex III, CIII). Cu cation serves as cofactor.

Its subcellular location is the mitochondrion inner membrane. It carries out the reaction 4 Fe(II)-[cytochrome c] + O2 + 8 H(+)(in) = 4 Fe(III)-[cytochrome c] + 2 H2O + 4 H(+)(out). Functionally, component of the cytochrome c oxidase, the last enzyme in the mitochondrial electron transport chain which drives oxidative phosphorylation. The respiratory chain contains 3 multisubunit complexes succinate dehydrogenase (complex II, CII), ubiquinol-cytochrome c oxidoreductase (cytochrome b-c1 complex, complex III, CIII) and cytochrome c oxidase (complex IV, CIV), that cooperate to transfer electrons derived from NADH and succinate to molecular oxygen, creating an electrochemical gradient over the inner membrane that drives transmembrane transport and the ATP synthase. Cytochrome c oxidase is the component of the respiratory chain that catalyzes the reduction of oxygen to water. Electrons originating from reduced cytochrome c in the intermembrane space (IMS) are transferred via the dinuclear copper A center (CU(A)) of subunit 2 and heme A of subunit 1 to the active site in subunit 1, a binuclear center (BNC) formed by heme A3 and copper B (CU(B)). The BNC reduces molecular oxygen to 2 water molecules using 4 electrons from cytochrome c in the IMS and 4 protons from the mitochondrial matrix. This Brettanomyces naardenensis (Yeast) protein is Cytochrome c oxidase subunit 2 (COX2).